Consider the following 251-residue polypeptide: Imidazole glycerol phosphate synthase subunit HisF (251 aa).

Active-site residues include aspartate 11 and aspartate 130.

This sequence belongs to the HisA/HisF family. Heterodimer of HisH and HisF.

Its subcellular location is the cytoplasm. The enzyme catalyses 5-[(5-phospho-1-deoxy-D-ribulos-1-ylimino)methylamino]-1-(5-phospho-beta-D-ribosyl)imidazole-4-carboxamide + L-glutamine = D-erythro-1-(imidazol-4-yl)glycerol 3-phosphate + 5-amino-1-(5-phospho-beta-D-ribosyl)imidazole-4-carboxamide + L-glutamate + H(+). The protein operates within amino-acid biosynthesis; L-histidine biosynthesis; L-histidine from 5-phospho-alpha-D-ribose 1-diphosphate: step 5/9. Its function is as follows. IGPS catalyzes the conversion of PRFAR and glutamine to IGP, AICAR and glutamate. The HisF subunit catalyzes the cyclization activity that produces IGP and AICAR from PRFAR using the ammonia provided by the HisH subunit. The polypeptide is Imidazole glycerol phosphate synthase subunit HisF (Chlorobium phaeovibrioides (strain DSM 265 / 1930) (Prosthecochloris vibrioformis (strain DSM 265))).